The chain runs to 329 residues: N-acetyl-gamma-glutamyl-phosphate reductase (329 aa).

Cys155 is a catalytic residue.

It belongs to the NAGSA dehydrogenase family. Type 1 subfamily.

Its subcellular location is the cytoplasm. The catalysed reaction is N-acetyl-L-glutamate 5-semialdehyde + phosphate + NADP(+) = N-acetyl-L-glutamyl 5-phosphate + NADPH + H(+). Its pathway is amino-acid biosynthesis; L-arginine biosynthesis; N(2)-acetyl-L-ornithine from L-glutamate: step 3/4. Catalyzes the NADPH-dependent reduction of N-acetyl-5-glutamyl phosphate to yield N-acetyl-L-glutamate 5-semialdehyde. The protein is N-acetyl-gamma-glutamyl-phosphate reductase of Shewanella pealeana (strain ATCC 700345 / ANG-SQ1).